The chain runs to 420 residues: C-methyltransferase NovU (420 aa).

It belongs to the methyltransferase superfamily.

Its pathway is antibiotic biosynthesis; novobiocin biosynthesis. C-methyltransferase that acts together with NovW to catalyze the formation of dTDP-4-keto-6-deoxy-5-C-methyl-L-lyxo-hexose from dTDP-4-keto-6-deoxy-D-glucose in the novobiocin biosynthesis pathway, an aminocoumarin family antibiotic that targets bacterial DNA gyrases. The protein is C-methyltransferase NovU (novU) of Streptomyces niveus (Streptomyces spheroides).